The chain runs to 146 residues: Probable glycine cleavage system H protein 1, mitochondrial (146 aa).

The N-terminal 30 residues, Met-1–Asp-30, are a transit peptide targeting the mitochondrion. The Lipoyl-binding domain occupies Asn-41–Lys-123. Lys-82 is subject to N6-lipoyllysine.

This sequence belongs to the GcvH family. As to quaternary structure, the glycine cleavage system is composed of four proteins: P, T, L and H. It depends on (R)-lipoate as a cofactor.

It localises to the mitochondrion. The glycine cleavage system catalyzes the degradation of glycine. The H protein shuttles the methylamine group of glycine from the P protein to the T protein. This is Probable glycine cleavage system H protein 1, mitochondrial (gcvH1) from Dictyostelium discoideum (Social amoeba).